A 213-amino-acid chain; its full sequence is MKVKATKLRIKQRRKNKGLNISRLDIIRAEMDVVPSPGLPEKVNEKSKNIPLPEGINLLSSKEIIDLIQTHRHQLELYVTKFNPLTDFAGKIHAFRDQFKQLEENFEDLHEQKDKVQALLENCRILESKYVASWQDYHSEFSKKYGDIALKKKLEQNTKKLDEESSQLETTTRSIDSADDLDQFIKNYLDIRTQYHLRREKLATWDKQGNLKY.

Positions 128 to 213 (SKYVASWQDY…TWDKQGNLKY (86 aa)) constitute a VPS37 C-terminal domain.

Belongs to the VPS37 family. In terms of assembly, component of the ESCRT-I complex (endosomal sorting complex required for transport I) which consists of STP22, VPS28, SRN2 and MVB12 in a 1:1:1:1 stoichiometry. Interacts with STP22 and MVB12.

Its subcellular location is the cytoplasm. It is found in the endosome. It localises to the late endosome membrane. Its function is as follows. Component of the ESCRT-I complex, a regulator of vesicular trafficking process. Required for normal endocytic and biosynthetic traffic to the yeast vacuole. This Saccharomyces cerevisiae (strain ATCC 204508 / S288c) (Baker's yeast) protein is Protein SRN2 (SRN2).